The chain runs to 177 residues: Large ribosomal subunit protein uL6 (177 aa).

It belongs to the universal ribosomal protein uL6 family. As to quaternary structure, part of the 50S ribosomal subunit.

This protein binds to the 23S rRNA, and is important in its secondary structure. It is located near the subunit interface in the base of the L7/L12 stalk, and near the tRNA binding site of the peptidyltransferase center. The polypeptide is Large ribosomal subunit protein uL6 (Verminephrobacter eiseniae (strain EF01-2)).